A 273-amino-acid polypeptide reads, in one-letter code: 4-hydroxy-tetrahydrodipicolinate reductase (273 aa).

NAD(+)-binding positions include 11–16 (GALGRM), 102–104 (GTT), and 126–129 (SPNF). The active-site Proton donor/acceptor is His-159. His-160 is a binding site for (S)-2,3,4,5-tetrahydrodipicolinate. Residue Lys-163 is the Proton donor of the active site. Residue 169–170 (GT) coordinates (S)-2,3,4,5-tetrahydrodipicolinate.

Belongs to the DapB family. In terms of assembly, homotetramer.

The protein resides in the cytoplasm. It carries out the reaction (S)-2,3,4,5-tetrahydrodipicolinate + NAD(+) + H2O = (2S,4S)-4-hydroxy-2,3,4,5-tetrahydrodipicolinate + NADH + H(+). The enzyme catalyses (S)-2,3,4,5-tetrahydrodipicolinate + NADP(+) + H2O = (2S,4S)-4-hydroxy-2,3,4,5-tetrahydrodipicolinate + NADPH + H(+). The protein operates within amino-acid biosynthesis; L-lysine biosynthesis via DAP pathway; (S)-tetrahydrodipicolinate from L-aspartate: step 4/4. Functionally, catalyzes the conversion of 4-hydroxy-tetrahydrodipicolinate (HTPA) to tetrahydrodipicolinate. The sequence is that of 4-hydroxy-tetrahydrodipicolinate reductase from Buchnera aphidicola subsp. Cinara cedri (strain Cc).